Here is an 88-residue protein sequence, read N- to C-terminus: MQAVFSSPSPAPVTPLMPLPDITQERFLRVPEVMHLCGLSRSTIYELIRKGEFPPQVSLGGKNVAWLHSEVTAWMAGRIAGRKRGYDA.

The segment at residues 30–49 (VPEVMHLCGLSRSTIYELIR) is a DNA-binding region (H-T-H motif).

The protein to E.coli prophage CP4-57 regulatory protein alpA.

This is an uncharacterized protein from Escherichia coli (Bacteriophage P4).